Consider the following 545-residue polypeptide: MATDLNRKRSATSGSLSVTNPNIKATNRKPARVYSVSSDIVPQALTHPDEDVHLKTSKSPHDAAPRWSQVGFQSIFHDGSNARRSTDSIEEEYSQGTENNDGHSEIGSSSSNRMEGNTTSNDSLFSSNSRGNKRRLSIFTNSKDNMRNRSRSGSKNYGTVITGTSSNNISRSGSKLFHTKSNMSVNSLQSSLSTGHSHSNKGSNVFSKMAKKLLPYKPHNSIGKDDVEPVVPSPFSKFLHSSYGKHRSPVQFIHTSTGGLIDSGKSVYSFNPSINNNPNDTALSLIQDDAFDATNVSLLHDLLKNLPSLIANYKSFTVQELFVLEGNIWGIYCSIVVELFKNKRVWQLPAKIEDIDRLLEFYITLKTQTKAAVTHSRFLAEIEEFITTSLYILENQIVFNYANEDTVNTALKRVGIIWKVFYQQVYYDMMAVLLPFEKSFQKNSNYWLDGYLSEPSRYAPSIDVLLLKCFRDSIILPYYESFLHTNDGASKSFQRYIFSEEEQNGVTEEDKLTLLQCFGILNTIKGNSRNQRIIGELLEGIRMSI.

Disordered stretches follow at residues 1-24 (MATD…PNIK) and 78-166 (DGSN…GTSS). Polar residues-rich tracts occupy residues 11–24 (ATSG…PNIK), 106–130 (IGSS…SNSR), and 151–166 (RSGS…GTSS).

Interacts with the target of rapamycin complex 2 (TORC2) subunit TSC11 and the TORC2 effectors SLM1 and SLM2.

This is Probable target of rapamycin complex 2 subunit BIT2 (BIT2) from Saccharomyces cerevisiae (strain ATCC 204508 / S288c) (Baker's yeast).